Consider the following 220-residue polypeptide: Heptaprenyl diphosphate synthase component 1 (220 aa).

As to quaternary structure, heterodimer of component I and II.

The catalysed reaction is 4 isopentenyl diphosphate + (2E,6E)-farnesyl diphosphate = all-trans-heptaprenyl diphosphate + 4 diphosphate. Functionally, supplies heptaprenyl diphosphate, the precursor for the side chain of the isoprenoid quinone menaquinone-7 (MQ-7). The chain is Heptaprenyl diphosphate synthase component 1 (hepS) from Geobacillus stearothermophilus (Bacillus stearothermophilus).